The chain runs to 356 residues: MTRLTLALDVMGGDFGPSVTVPAALQALNSNSQLTLLLVGNPDAITPLLAKADFEQRSRLQIIPAQSVIASDARPSQAIRASRGSSMRMALELVKEGRAQACVSAGNTGALMGLAKLLLKPLEGIERPALVTVLPHQQKGKTVVLDLGANVDCDSTMLVQFAIMGSVLAEEVVEIPNPRVALLNIGEEEVKGLDSIRDASAVLKTIPSINYIGYLEANELLTGKTDVLVCDGFTGNVTLKTMEGVVRMFLSLLKSQGEGKKRSWWLLLLKRWLQKSLTRRFSHLNPDQYNGACLLGLRGTVIKSHGAANQRAFAVAIEQAVQAVQRQVPQRIAARLESVYPAGFELLDGGKSGTLR.

Belongs to the PlsX family. In terms of assembly, homodimer. Probably interacts with PlsY.

The protein resides in the cytoplasm. It carries out the reaction a fatty acyl-[ACP] + phosphate = an acyl phosphate + holo-[ACP]. It functions in the pathway lipid metabolism; phospholipid metabolism. In terms of biological role, catalyzes the reversible formation of acyl-phosphate (acyl-PO(4)) from acyl-[acyl-carrier-protein] (acyl-ACP). This enzyme utilizes acyl-ACP as fatty acyl donor, but not acyl-CoA. This Shigella flexneri serotype 5b (strain 8401) protein is Phosphate acyltransferase.